The sequence spans 607 residues: Elongation factor 4 (607 aa).

Residues 11–193 (KNIRNFSIIA…KIVEVVPPPE (183 aa)) enclose the tr-type G domain. GTP contacts are provided by residues 23–28 (DHGKST) and 140–143 (NKID).

This sequence belongs to the TRAFAC class translation factor GTPase superfamily. Classic translation factor GTPase family. LepA subfamily.

It is found in the cell membrane. It catalyses the reaction GTP + H2O = GDP + phosphate + H(+). Required for accurate and efficient protein synthesis under certain stress conditions. May act as a fidelity factor of the translation reaction, by catalyzing a one-codon backward translocation of tRNAs on improperly translocated ribosomes. Back-translocation proceeds from a post-translocation (POST) complex to a pre-translocation (PRE) complex, thus giving elongation factor G a second chance to translocate the tRNAs correctly. Binds to ribosomes in a GTP-dependent manner. This Staphylococcus saprophyticus subsp. saprophyticus (strain ATCC 15305 / DSM 20229 / NCIMB 8711 / NCTC 7292 / S-41) protein is Elongation factor 4.